Here is a 341-residue protein sequence, read N- to C-terminus: Probable dual-specificity RNA methyltransferase RlmN (341 aa).

Glu-88 functions as the Proton acceptor in the catalytic mechanism. A Radical SAM core domain is found at 94–314 (EGDRATLCIS…ESHGFTCTIR (221 aa)). Cys-101 and Cys-325 are oxidised to a cystine. [4Fe-4S] cluster is bound by residues Cys-108, Cys-112, and Cys-115. S-adenosyl-L-methionine is bound by residues 153 to 154 (GE), Ser-185, 206 to 208 (SLH), and His-282. Cys-325 functions as the S-methylcysteine intermediate in the catalytic mechanism.

The protein belongs to the radical SAM superfamily. RlmN family. [4Fe-4S] cluster is required as a cofactor.

The protein resides in the cytoplasm. It catalyses the reaction adenosine(2503) in 23S rRNA + 2 reduced [2Fe-2S]-[ferredoxin] + 2 S-adenosyl-L-methionine = 2-methyladenosine(2503) in 23S rRNA + 5'-deoxyadenosine + L-methionine + 2 oxidized [2Fe-2S]-[ferredoxin] + S-adenosyl-L-homocysteine. The catalysed reaction is adenosine(37) in tRNA + 2 reduced [2Fe-2S]-[ferredoxin] + 2 S-adenosyl-L-methionine = 2-methyladenosine(37) in tRNA + 5'-deoxyadenosine + L-methionine + 2 oxidized [2Fe-2S]-[ferredoxin] + S-adenosyl-L-homocysteine. Its function is as follows. Specifically methylates position 2 of adenine 2503 in 23S rRNA and position 2 of adenine 37 in tRNAs. The polypeptide is Probable dual-specificity RNA methyltransferase RlmN (Porphyromonas gingivalis (strain ATCC BAA-308 / W83)).